Consider the following 1241-residue polypeptide: Intraflagellar transport protein 122 homolog (1241 aa).

4 WD repeats span residues 10–50 (KAEH…QPLK), 51–91 (GHKD…LKYT), 93–129 (NDAIQCVSYNPITHQLASCSSSDFGLWSPEQKSVSKH), and 131–169 (SSSKIICCSWTNDGQYLALGMFNGIISIRNKNGEEKVKI). The disordered stretch occupies residues 222–246 (VYSSQGSEAEEEEPEEEDDSPRDDN). Positions 229–242 (EAEEEEPEEEDDSP) are enriched in acidic residues. 3 WD repeats span residues 278-317 (ALNFDPCCISYFTKGEYILLGGSDKQVSLFTKDGVRLGTV), 319-359 (EQNS…HGLY), and 512-551 (KQATAVRCLDMSASRKKLAVVDENDTCLVYDIDTKELLFQ).

As to quaternary structure, component of the IFT complex A (IFT-A) complex. IFT-A complex is divided into a core subcomplex composed of IFT122:IFT140:WDR19 which is associated with TULP3 and a peripheral subcomplex composed of IFT43:WDR35:TTC21B. Interacts with IFT43:WDR35; the interaction connects the 2 IFT-A subcomplexes. Interacts with IFTAP; the interaction associates IFTAP with IFT-A complex. In terms of tissue distribution, expressed in many tissues. Predominant expression in testis and pituitary.

It localises to the cell projection. Its subcellular location is the cilium. It is found in the cytoplasm. The protein resides in the cytoskeleton. The protein localises to the cilium basal body. Its function is as follows. As a component of the IFT complex A (IFT-A), a complex required for retrograde ciliary transport and entry into cilia of G protein-coupled receptors (GPCRs), it is required in ciliogenesis and ciliary protein trafficking. Involved in cilia formation during neuronal patterning. Acts as a negative regulator of Shh signaling. Required to recruit TULP3 to primary cilia. The sequence is that of Intraflagellar transport protein 122 homolog from Homo sapiens (Human).